The sequence spans 302 residues: 4-hydroxy-tetrahydrodipicolinate synthase (302 aa).

Residue Thr-50 participates in pyruvate binding. The Proton donor/acceptor role is filled by Tyr-138. Lys-167 serves as the catalytic Schiff-base intermediate with substrate. Val-209 contributes to the pyruvate binding site.

The protein belongs to the DapA family. Homotetramer; dimer of dimers.

It localises to the cytoplasm. The catalysed reaction is L-aspartate 4-semialdehyde + pyruvate = (2S,4S)-4-hydroxy-2,3,4,5-tetrahydrodipicolinate + H2O + H(+). It functions in the pathway amino-acid biosynthesis; L-lysine biosynthesis via DAP pathway; (S)-tetrahydrodipicolinate from L-aspartate: step 3/4. Its function is as follows. Catalyzes the condensation of (S)-aspartate-beta-semialdehyde [(S)-ASA] and pyruvate to 4-hydroxy-tetrahydrodipicolinate (HTPA). The polypeptide is 4-hydroxy-tetrahydrodipicolinate synthase (Salinibacter ruber (strain DSM 13855 / M31)).